Consider the following 185-residue polypeptide: Small ribosomal subunit protein bS6 (185 aa).

Residues 115–141 (AAQKAAAEKAEAARLEAEKAAEEEAAK) show a composition bias toward basic and acidic residues. Residues 115-185 (AAQKAAAEKA…EEPKSDEEDA (71 aa)) are disordered. Over residues 142–169 (AAEAQAKEAPAAEAPAEEAPAAEAPAEA) the composition is skewed to low complexity. Residues 170–185 (PAEEPAEEPKSDEEDA) show a composition bias toward acidic residues.

The protein belongs to the bacterial ribosomal protein bS6 family.

Functionally, binds together with bS18 to 16S ribosomal RNA. This Desulfatibacillum aliphaticivorans protein is Small ribosomal subunit protein bS6.